A 60-amino-acid chain; its full sequence is Large ribosomal subunit protein uL30 (60 aa).

This sequence belongs to the universal ribosomal protein uL30 family. As to quaternary structure, part of the 50S ribosomal subunit.

In Acidothermus cellulolyticus (strain ATCC 43068 / DSM 8971 / 11B), this protein is Large ribosomal subunit protein uL30.